A 490-amino-acid chain; its full sequence is Lipoprotein lipase (490 aa).

The N-terminal stretch at 1-25 (MERGRGMGKTALLAVLCLCLRGAAG) is a signal peptide. The tract at residues 32–53 (MNFEGIESKFSLRTPAEPDEDV) is interaction with GPIHBP1. An intrachain disulfide couples Cys-54 to Cys-67. Asn-70 carries N-linked (GlcNAc...) (complex) asparagine glycosylation. Tyr-121 bears the 3'-nitrotyrosine mark. Residue Ser-159 is the Nucleophile of the active site. The Charge relay system role is filled by Asp-183. A 3'-nitrotyrosine modification is found at Tyr-191. Ca(2+) is bound by residues Ala-194, Arg-197, Ser-199, and Asp-202. Cysteines 243 and 266 form a disulfide. Residues 243 to 266 (CNLGEALRLIAEKGFSDVDQLVKC) are essential for determining substrate specificity. His-268 serves as the catalytic Charge relay system. 2 disulfide bridges follow: Cys-291–Cys-310 and Cys-302–Cys-305. The PLAT domain occupies 341 to 464 (FHYQVKIHFF…KGEEAAIFVK (124 aa)). Tyr-343 is modified (3'-nitrotyrosine). Asn-354 and Asn-386 each carry an N-linked (GlcNAc...) asparagine glycan. Residues 417 to 421 (WSDWW) are important for interaction with lipoprotein particles. The interval 430 to 434 (RVRVK) is important for heparin binding. Heparin is bound at residue 430–441 (RVRVKSGETQKK). The tract at residues 443-467 (VFCSRDGSSRLGKGEEAAIFVKCLE) is interaction with GPIHBP1. A disulfide bridge connects residues Cys-445 and Cys-465. The segment at 471-490 (SRKRGGAKKASKENSAHESA) is disordered. Basic and acidic residues predominate over residues 480 to 490 (ASKENSAHESA).

This sequence belongs to the AB hydrolase superfamily. Lipase family. As to quaternary structure, homodimer. Interacts with GPIHBP1 with 1:1 stoichiometry. Interacts with APOC2; the interaction activates LPL activity in the presence of lipids. Interaction with heparan sulfate proteoglycans is required to protect LPL against loss of activity. Associates with lipoprotein particles in blood plasma. Interacts with LMF1 and SEL1L; interaction with SEL1L is required to prevent aggregation of newly synthesized LPL in the endoplasmic reticulum (ER), and for normal export of LPL from the ER to the extracellular space. In terms of processing, N-glycan at Asn-70 is a triantennary complex oligosaccharide containing sialic acid, galactose, mannose, and N-acetylglucosamine, the reducing GlcNAc being sulfated at C6. Post-translationally, tyrosine nitration after lipopolysaccharide (LPS) challenge down-regulates the lipase activity.

The protein localises to the cell membrane. It is found in the secreted. Its subcellular location is the extracellular space. The protein resides in the extracellular matrix. It carries out the reaction a triacylglycerol + H2O = a diacylglycerol + a fatty acid + H(+). The catalysed reaction is a 1,2-diacyl-sn-glycero-3-phosphocholine + H2O = a 2-acyl-sn-glycero-3-phosphocholine + a fatty acid + H(+). It catalyses the reaction 1,2,3-tri-(9Z-octadecenoyl)-glycerol + H2O = di-(9Z)-octadecenoylglycerol + (9Z)-octadecenoate + H(+). The enzyme catalyses 1,2-di-(9Z-octadecenoyl)-sn-glycero-3-phosphocholine + H2O = (9Z-octadecenoyl)-sn-glycero-3-phosphocholine + (9Z)-octadecenoate + H(+). It carries out the reaction 1,2,3-tributanoylglycerol + H2O = dibutanoylglycerol + butanoate + H(+). The catalysed reaction is 1,2-dihexadecanoyl-sn-glycero-3-phosphocholine + H2O = hexadecanoyl-sn-glycero-3-phosphocholine + hexadecanoate + H(+). With respect to regulation, ca(2+) binding promotes protein stability and formation of the active homodimer. Its function is as follows. Key enzyme in triglyceride metabolism. Catalyzes the hydrolysis of triglycerides from circulating chylomicrons and very low density lipoproteins (VLDL), and thereby plays an important role in lipid clearance from the blood stream, lipid utilization and storage. Although it has both phospholipase and triglyceride lipase activities it is primarily a triglyceride lipase with low but detectable phospholipase activity. Mediates margination of triglyceride-rich lipoprotein particles in capillaries. Recruited to its site of action on the luminal surface of vascular endothelium by binding to GPIHBP1 and cell surface heparan sulfate proteoglycans. The chain is Lipoprotein lipase (LPL) from Gallus gallus (Chicken).